We begin with the raw amino-acid sequence, 201 residues long: 3-isopropylmalate dehydratase small subunit (201 aa).

The protein belongs to the LeuD family. LeuD type 1 subfamily. In terms of assembly, heterodimer of LeuC and LeuD.

It catalyses the reaction (2R,3S)-3-isopropylmalate = (2S)-2-isopropylmalate. It participates in amino-acid biosynthesis; L-leucine biosynthesis; L-leucine from 3-methyl-2-oxobutanoate: step 2/4. Functionally, catalyzes the isomerization between 2-isopropylmalate and 3-isopropylmalate, via the formation of 2-isopropylmaleate. The protein is 3-isopropylmalate dehydratase small subunit of Cereibacter sphaeroides (strain ATCC 17029 / ATH 2.4.9) (Rhodobacter sphaeroides).